The primary structure comprises 771 residues: Chaperone protein dnaK3 (771 aa).

T198 bears the Phosphothreonine; by autocatalysis mark. A disordered region spans residues 624-771 (FDDDDDYYNR…GWDDDDDDWF (148 aa)). 2 stretches are compositionally biased toward basic and acidic residues: residues 630-652 (YYNR…RYDD) and 708-734 (YDDR…RENA).

Belongs to the heat shock protein 70 family.

In terms of biological role, acts as a chaperone. The polypeptide is Chaperone protein dnaK3 (dnaK3) (Synechocystis sp. (strain ATCC 27184 / PCC 6803 / Kazusa)).